Reading from the N-terminus, the 56-residue chain is Potassium channel toxin alpha-KTx 9.1 (56 aa).

A signal peptide spans 1–28 (MSRLFTLVLIVLAMNVMMAIISDPVVEA). 3 disulfide bridges follow: Cys31-Cys47, Cys34-Cys52, and Cys38-Cys54.

Expressed by the venom gland.

The protein resides in the secreted. Its function is as follows. Blocks small conductance calcium-activated potassium channels (KCNN, SK). Weakly inhibits the Kv7.1/KCNQ1 channel (10 uM of the toxin inhibits currents by 23.3%). Low toxicity by intracerebroventricular injection into mice. This is Potassium channel toxin alpha-KTx 9.1 from Olivierus martensii (Manchurian scorpion).